Reading from the N-terminus, the 227-residue chain is Large ribosomal subunit protein bL25 (227 aa).

The disordered stretch occupies residues 199-227; sequence AIAEAQSAEAAEEKAEESAEDEKKDGEEA. Basic and acidic residues predominate over residues 209–227; it reads AEEKAEESAEDEKKDGEEA.

The protein belongs to the bacterial ribosomal protein bL25 family. CTC subfamily. Part of the 50S ribosomal subunit; part of the 5S rRNA/L5/L18/L25 subcomplex. Contacts the 5S rRNA. Binds to the 5S rRNA independently of L5 and L18.

This is one of the proteins that binds to the 5S RNA in the ribosome where it forms part of the central protuberance. This chain is Large ribosomal subunit protein bL25, found in Methylobacterium radiotolerans (strain ATCC 27329 / DSM 1819 / JCM 2831 / NBRC 15690 / NCIMB 10815 / 0-1).